Reading from the N-terminus, the 344-residue chain is Adenosine deaminase (344 aa).

The Zn(2+) site is built by His-14 and His-16. Residues His-16, Asp-18, and Gly-177 each coordinate substrate. His-204 lines the Zn(2+) pocket. Glu-207 (proton donor) is an active-site residue. Asp-284 is a binding site for Zn(2+).

It belongs to the metallo-dependent hydrolases superfamily. Adenosine and AMP deaminases family. Adenosine deaminase subfamily. It depends on Zn(2+) as a cofactor.

The enzyme catalyses adenosine + H2O + H(+) = inosine + NH4(+). The catalysed reaction is 2'-deoxyadenosine + H2O + H(+) = 2'-deoxyinosine + NH4(+). Catalyzes the hydrolytic deamination of adenosine and 2-deoxyadenosine. The polypeptide is Adenosine deaminase (Haemophilus ducreyi (strain 35000HP / ATCC 700724)).